The chain runs to 448 residues: tRNA modification GTPase MnmE (448 aa).

3 residues coordinate (6S)-5-formyl-5,6,7,8-tetrahydrofolate: Arg-22, Glu-79, and Lys-118. A TrmE-type G domain is found at 214–371 (GLHVVLAGQP…LRQELLRIAG (158 aa)). Asn-224 contributes to the K(+) binding site. GTP contacts are provided by residues 224-229 (NVGKSS), 243-249 (TPIAGTT), and 268-271 (DTAG). Residue Ser-228 participates in Mg(2+) binding. Residues Thr-243, Ile-245, and Thr-248 each coordinate K(+). Mg(2+) is bound at residue Thr-249. Lys-448 contributes to the (6S)-5-formyl-5,6,7,8-tetrahydrofolate binding site.

The protein belongs to the TRAFAC class TrmE-Era-EngA-EngB-Septin-like GTPase superfamily. TrmE GTPase family. As to quaternary structure, homodimer. Heterotetramer of two MnmE and two MnmG subunits. The cofactor is K(+).

The protein localises to the cytoplasm. Exhibits a very high intrinsic GTPase hydrolysis rate. Involved in the addition of a carboxymethylaminomethyl (cmnm) group at the wobble position (U34) of certain tRNAs, forming tRNA-cmnm(5)s(2)U34. The sequence is that of tRNA modification GTPase MnmE from Dechloromonas aromatica (strain RCB).